We begin with the raw amino-acid sequence, 218 residues long: Sodium channel regulatory subunit beta-1 (218 aa).

A signal peptide spans 1-18 (MGTLLALVVGAALVSSAW). Residues 19–157 (GGCVEVDSET…DKANRDMASI (139 aa)) are Extracellular-facing. Cystine bridges form between C21–C43 and C40–C121. Residues 22-150 (VEVDSETEAV…KIHIEVVDKA (129 aa)) form the Ig-like C2-type domain. Residues N93, N110, N114, and N135 are each glycosylated (N-linked (GlcNAc...) asparagine). A helical membrane pass occupies residues 158 to 179 (VSEIMMYVLIVVLTIWLVAEMV). Topologically, residues 180–218 (YCYKKIAAATEAAAQENASEYLAITSESKENCTGVQVAE) are cytoplasmic.

This sequence belongs to the sodium channel auxiliary subunit SCN1B (TC 8.A.17) family. In terms of assembly, a voltage-gated sodium (Nav) channel consists of an ion-conducting pore-forming alpha subunit functional on its own that is regulated by one or more beta subunits. Interacts with SCN1A; regulatory subunit of SCN1A/Nav1.1. Interacts with SCN3A; regulatory subunit of SCN3A/Nav1.3. Interacts with SCN4A; regulatory subunit of SCN4A/Nav1.4. Interacts with SCN5A; regulatory subunit of SCN5A/Nav1.5. Interacts with SCN8A; regulatory subunit of SCN8A/Nav1.6. Interacts with SCN9A; regulatory subunit of SCN9A/Nav1.7. Interacts with SCN10A; regulatory subunit of SCN10A/Nav1.8. Interacts with NFASC. Interacts with TMEM65.

It is found in the cell membrane. The protein localises to the perikaryon. It localises to the cell projection. The protein resides in the axon. Regulatory subunit of multiple voltage-gated sodium (Nav) channels directly mediating the depolarization of excitable membranes. Navs, also called VGSCs (voltage-gated sodium channels) or VDSCs (voltage-dependent sodium channels), operate by switching between closed and open conformations depending on the voltage difference across the membrane. In the open conformation they allow Na(+) ions to selectively pass through the pore, along their electrochemical gradient. The influx of Na+ ions provokes membrane depolarization, initiating the propagation of electrical signals throughout cells and tissues. The accessory beta subunits participate in localization and functional modulation of the Nav channels. Modulates the activity of SCN1A/Nav1.1, SCN2A/Nav1.2, SCN3A/Nav1.3, SCN4A/Nav1.4, SCN5A/Nav1.5, SCN8A/Nav1.6, SCN9A/Nav1.7 and SCN10A/Nav1.8. The sequence is that of Sodium channel regulatory subunit beta-1 from Canis lupus familiaris (Dog).